We begin with the raw amino-acid sequence, 342 residues long: tRNA dimethylallyltransferase (342 aa).

Positions 1–30 (MSANGPAAEPADGGRAVPAGGGEAVPAGGG) are disordered. Gly residues predominate over residues 19-30 (AGGGEAVPAGGG). ATP is bound at residue 49–56 (GPTAAGKS). A substrate-binding site is contributed by 51 to 56 (TAAGKS). The segment at 74 to 77 (DSMQ) is interaction with substrate tRNA.

Belongs to the IPP transferase family. In terms of assembly, monomer. It depends on Mg(2+) as a cofactor.

The enzyme catalyses adenosine(37) in tRNA + dimethylallyl diphosphate = N(6)-dimethylallyladenosine(37) in tRNA + diphosphate. Functionally, catalyzes the transfer of a dimethylallyl group onto the adenine at position 37 in tRNAs that read codons beginning with uridine, leading to the formation of N6-(dimethylallyl)adenosine (i(6)A). This chain is tRNA dimethylallyltransferase, found in Salinispora arenicola (strain CNS-205).